Reading from the N-terminus, the 45-residue chain is Bomanin Short 1 (45 aa).

Residues 1–20 (MKFFSVVTVFVLGLLAVANA) form the signal peptide. Positions 21–27 (VPLSPDP) are cleaved as a propeptide — removed by a dipeptidylpeptidase. Cysteines 36 and 39 form a disulfide. Position 43 is a glycine amide (Gly-43).

As to expression, hemolymph (at protein level).

It localises to the secreted. Its function is as follows. Secreted immune-induced peptide induced by Toll signaling. Has a role in resistance to bacterial and fungal infections. Has no activity against the fungus C.glabrata in vitro. The protein is Bomanin Short 1 of Drosophila melanogaster (Fruit fly).